The chain runs to 113 residues: MEHIQKGIAGEQKACAFLEQQGYKIIEKNLRIGKGEIDLIAVHNNCMCFIEVKYRKHNRYGFPEEFVTQKKLLKIQETAEAYIYTVNWQGRIRFDVVAITGEELPVHLMDVTL.

Belongs to the UPF0102 family.

The protein is UPF0102 protein CHU_0465 of Cytophaga hutchinsonii (strain ATCC 33406 / DSM 1761 / CIP 103989 / NBRC 15051 / NCIMB 9469 / D465).